Reading from the N-terminus, the 521-residue chain is GMP synthase [glutamine-hydrolyzing] (521 aa).

Residues 5 to 203 (KILILDFGSQ…VHEICGCGRD (199 aa)) form the Glutamine amidotransferase type-1 domain. The active-site Nucleophile is C82. Catalysis depends on residues H177 and E179. In terms of domain architecture, GMPS ATP-PPase spans 204-396 (WNMPDYVNEA…LGLPHEMVYR (193 aa)). 231–237 (SGGVDSS) provides a ligand contact to ATP.

As to quaternary structure, homodimer.

The catalysed reaction is XMP + L-glutamine + ATP + H2O = GMP + L-glutamate + AMP + diphosphate + 2 H(+). Its pathway is purine metabolism; GMP biosynthesis; GMP from XMP (L-Gln route): step 1/1. Functionally, catalyzes the synthesis of GMP from XMP. This Aromatoleum aromaticum (strain DSM 19018 / LMG 30748 / EbN1) (Azoarcus sp. (strain EbN1)) protein is GMP synthase [glutamine-hydrolyzing].